Reading from the N-terminus, the 614-residue chain is Fimbrin (614 aa).

EF-hand domains lie at 16-50 and 51-86; these read EEILTLTDQFNKLDVDGKGYLDQPTTIKAFEDSKK and GSYDEVREAIREVNVDSSGRVEPEDFVGIFNVLKKG. Residues aspartate 29, aspartate 31, tyrosine 35, threonine 40, aspartate 66, serine 68, arginine 70, and aspartate 75 each contribute to the Ca(2+) site. 2 actin-binding regions span residues 98–368 and 369–614; these read TIKG…GLEP and LNEE…LMAV. Calponin-homology (CH) domains are found at residues 112 to 233, 261 to 364, 385 to 495, and 508 to 614; these read EEER…RRGL, LPPE…NTHP, EREA…RMNI, and TLSD…LMAV.

The protein resides in the cytoplasm. The protein localises to the cytoskeleton. It localises to the actin patch. Its function is as follows. Binds to actin, and functionally associates with actin structures involved in the development and maintenance of cell polarity. Plays a role in cytokinesis. Plays important roles in mating and in spore formation. The polypeptide is Fimbrin (fim1) (Schizosaccharomyces pombe (strain 972 / ATCC 24843) (Fission yeast)).